Here is a 345-residue protein sequence, read N- to C-terminus: MLPCFQLLRIGGGRGGDLYTFHPPAGAGCTYRLGHRADLCDVALRPQQEPGLISGIHAELHAEPRGDDWRVSLEDHSSQGTLVNNVRLPRGHRLELSDGDLLTFGPEGPPGTSPSEFYFMFQQVRVKPQDFAAITIPRSRGEARVGAGFRPMLPSQGAPQRPLSTFSPAPKATLILNSIGSLSKLRPQPLTFSPSWGGPKSLPVPAPPGEMGTTPSAPPQRNRRKSVHRVLAELDDESEPPENPPPVLMEPRKKLRVDKAPLTPTGNRRGRPRKYPVSAPMAPPAVGGGEPCAAPCCCLPQEETVAWVQCDGCDVWFHVACVGCSIQAAREADFRCPGCRAGIQT.

Positions Tyr-31–Leu-88 constitute an FHA domain. A Phosphoserine modification is found at Ser-78. A disordered region spans residues Leu-190–Val-227. A PHD-type zinc finger spans residues Ala-293–Gly-342. 8 residues coordinate Zn(2+): Cys-296, Cys-298, Cys-310, Cys-313, His-318, Cys-321, Cys-336, and Cys-339.

It localises to the nucleus. In terms of biological role, potential transcription factor that may play a role in the regulation of genes involved in cell cycle G1/S transition. May bind to regulatory elements of genes, including the promoter of the transcription factor FOXO1. The polypeptide is Transcription factor 19 (TCF19) (Homo sapiens (Human)).